The chain runs to 714 residues: FERM domain-containing protein 7 (714 aa).

One can recognise an FERM domain in the interval 2-282 (LHLKVQFLDD…EYHAFFRLSE (281 aa)). Residues 537 to 558 (NIRMKSFQQDLQVLQEAIARTS) are a coiled coil.

In terms of tissue distribution, expressed in liver, kidney, pancreas and at low levels in brain and heart. Expressed in embryonic brain and developing neural retina.

Its subcellular location is the cell projection. The protein localises to the neuron projection. It localises to the growth cone. Its function is as follows. Plays a role in neurite development, may be through the activation of the GTPase RAC1. Plays a role in the control of eye movement and gaze stability. The polypeptide is FERM domain-containing protein 7 (FRMD7) (Homo sapiens (Human)).